A 129-amino-acid polypeptide reads, in one-letter code: uncharacterized protein (129 aa).

Residues 86-96 (NDGFSSDDEPE) show a composition bias toward acidic residues. The disordered stretch occupies residues 86-116 (NDGFSSDDEPEEHVILTEDNQGEPSETPQAT). Polar residues predominate over residues 103 to 116 (EDNQGEPSETPQAT).

Belongs to the asfivirus D129L family.

This is an uncharacterized protein from African swine fever virus (strain Badajoz 1971 Vero-adapted) (Ba71V).